Reading from the N-terminus, the 330-residue chain is MKNILNRLINHETLSKQEAKNMLVNISNGSYNPSQIASFLTVYMMRNITINELAGFREALLELCIPIDLSAYNTIDLCGTGGDGKDTFNISTLASFVTAGAGIKVAKHGNYGVSSISGSSNVMENLGIKFSNDPIFLEKCIDQAGICVLHAPLFHPAMKNVAPIRKELAVKTFFNMLGPMVNPSFPKNQLVGVFNLELARMYSYLYQNTKTNYTILHSLDGYDEISLTGNTKTITNKMEGMLKPEDFGVNLLSQTDIQGGTTIQESAQMFVTILSGKGTEAQNNVVCANAGMAIATVNNLNPIQGFELAKESLLSGKGLETLKKLQQLSL.

5-phospho-alpha-D-ribose 1-diphosphate contacts are provided by residues glycine 79, 82–83 (GD), threonine 87, 89–92 (NIST), 107–115 (KHGNYGVSS), and serine 119. Position 79 (glycine 79) interacts with anthranilate. Position 91 (serine 91) interacts with Mg(2+). Asparagine 110 is a binding site for anthranilate. Arginine 165 is an anthranilate binding site. Residues aspartate 223 and glutamate 224 each contribute to the Mg(2+) site.

Belongs to the anthranilate phosphoribosyltransferase family. As to quaternary structure, homodimer. Requires Mg(2+) as cofactor.

The enzyme catalyses N-(5-phospho-beta-D-ribosyl)anthranilate + diphosphate = 5-phospho-alpha-D-ribose 1-diphosphate + anthranilate. It functions in the pathway amino-acid biosynthesis; L-tryptophan biosynthesis; L-tryptophan from chorismate: step 2/5. In terms of biological role, catalyzes the transfer of the phosphoribosyl group of 5-phosphorylribose-1-pyrophosphate (PRPP) to anthranilate to yield N-(5'-phosphoribosyl)-anthranilate (PRA). The chain is Anthranilate phosphoribosyltransferase from Flavobacterium psychrophilum (strain ATCC 49511 / DSM 21280 / CIP 103535 / JIP02/86).